Consider the following 204-residue polypeptide: Proteasome subunit beta type-3 (204 aa).

The protein belongs to the peptidase T1B family. The 26S proteasome consists of a 20S proteasome core and two 19S regulatory subunits. The 20S proteasome core is composed of 28 subunits that are arranged in four stacked rings, resulting in a barrel-shaped structure. The two end rings are each formed by seven alpha subunits, and the two central rings are each formed by seven beta subunits. The catalytic chamber with the active sites is on the inside of the barrel.

The protein resides in the cytoplasm. It is found in the nucleus. Non-catalytic component of the proteasome, a multicatalytic proteinase complex which is characterized by its ability to cleave peptides with Arg, Phe, Tyr, Leu, and Glu adjacent to the leaving group at neutral or slightly basic pH. The proteasome has an ATP-dependent proteolytic activity. This is Proteasome subunit beta type-3 (PBC1) from Picea mariana (Black spruce).